The primary structure comprises 346 residues: dTDP-glucose 4,6-dehydratase (346 aa).

NAD(+) is bound by residues 17 to 18, 38 to 41, 64 to 65, 86 to 90, and threonine 105; these read FI, DKLT, DI, and LAAES. Serine 90 contacts substrate. Threonine 139 lines the substrate pocket. The active-site Proton donor is the aspartate 140. Residues glutamate 141 and tyrosine 165 each act as proton acceptor in the active site. 165–169 serves as a coordination point for NAD(+); it reads YSASK. Asparagine 194 lines the substrate pocket. Residue asparagine 195 participates in NAD(+) binding. Residues 204–205, 220–222, arginine 229, asparagine 264, and 298–302 contribute to the substrate site; these read KL, PVY, and DRPGH.

Belongs to the NAD(P)-dependent epimerase/dehydratase family. dTDP-glucose dehydratase subfamily. As to quaternary structure, homodimer. NAD(+) serves as cofactor.

It carries out the reaction dTDP-alpha-D-glucose = dTDP-4-dehydro-6-deoxy-alpha-D-glucose + H2O. Its pathway is carbohydrate biosynthesis; dTDP-L-rhamnose biosynthesis. The protein operates within bacterial outer membrane biogenesis; LPS O-antigen biosynthesis. Functionally, catalyzes the dehydration of dTDP-D-glucose to form dTDP-6-deoxy-D-xylo-4-hexulose via a three-step process involving oxidation, dehydration and reduction. This chain is dTDP-glucose 4,6-dehydratase, found in Neisseria gonorrhoeae.